Consider the following 99-residue polypeptide: Small integral membrane protein 14 (99 aa).

At 1–49 (MAEGGFDPCECVCSHEHAMRRLINLLRQSQSYCTDTECLQELPGPSSDN) the chain is on the lumenal side. Residues 50–70 (GISITMILMAWMVIAVILFLL) form a helical membrane-spanning segment. At 71–99 (RPPNLRGSNLTGKPASPHNGQDPPAPPVD) the chain is on the cytoplasmic side. A disordered region spans residues 78–99 (SNLTGKPASPHNGQDPPAPPVD).

The protein resides in the endoplasmic reticulum membrane. In Bos taurus (Bovine), this protein is Small integral membrane protein 14 (SMIM14).